The sequence spans 154 residues: CASP-like protein 5B3 (154 aa).

Topologically, residues 1–17 (MKDVVGSPGTWSGMSLR) are cytoplasmic. The chain crosses the membrane as a helical span at residues 18–38 (VSQCVFAGASVVAMASAYGFS). N-linked (GlcNAc...) asparagine glycosylation occurs at N39. The Extracellular portion of the chain corresponds to 39–42 (NYTA). The helical transmembrane segment at 43-63 (FCYLIASMGLQLLWSFGLACL) threads the bilayer. Residues 64 to 77 (DIYSLQTKRDLHNP) are Cytoplasmic-facing. Residues 78–98 (VLVSLFVVGDWVTAILSFAAA) form a helical membrane-spanning segment. Topologically, residues 99-129 (SASAGVTILFERDVHFCRMYPQLSCGRYELS) are extracellular. A helical transmembrane segment spans residues 130–150 (VILAFITWSFIATSAVSMFWL). Residues 151 to 154 (LASL) lie on the Cytoplasmic side of the membrane.

Belongs to the Casparian strip membrane proteins (CASP) family. In terms of assembly, homodimer and heterodimers.

Its subcellular location is the cell membrane. This is CASP-like protein 5B3 from Oryza sativa subsp. indica (Rice).